Here is a 383-residue protein sequence, read N- to C-terminus: uncharacterized protein (383 aa).

The protein belongs to the peptidase M20 family.

This is an uncharacterized protein from Staphylococcus epidermidis (strain ATCC 35984 / DSM 28319 / BCRC 17069 / CCUG 31568 / BM 3577 / RP62A).